Consider the following 329-residue polypeptide: Phenylalanine--tRNA ligase alpha subunit (329 aa).

E254 serves as a coordination point for Mg(2+).

Belongs to the class-II aminoacyl-tRNA synthetase family. Phe-tRNA synthetase alpha subunit type 1 subfamily. In terms of assembly, tetramer of two alpha and two beta subunits. It depends on Mg(2+) as a cofactor.

It is found in the cytoplasm. The enzyme catalyses tRNA(Phe) + L-phenylalanine + ATP = L-phenylalanyl-tRNA(Phe) + AMP + diphosphate + H(+). The sequence is that of Phenylalanine--tRNA ligase alpha subunit from Actinobacillus succinogenes (strain ATCC 55618 / DSM 22257 / CCUG 43843 / 130Z).